A 109-amino-acid chain; its full sequence is Small ribosomal subunit protein bS18c (109 aa).

A disordered region spans residues Gly-82–Phe-109.

Belongs to the bacterial ribosomal protein bS18 family. In terms of assembly, part of the 30S ribosomal subunit.

The protein resides in the plastid. The protein is Small ribosomal subunit protein bS18c of Cuscuta reflexa (Southern Asian dodder).